The sequence spans 1287 residues: SCL-interrupting locus protein (1287 aa).

An N-acetylmethionine modification is found at methionine 1. The segment at 1 to 1018 (MEPIYPFARP…IDSPTKVKKN (1018 aa)) is interaction with RBM14. An interaction with CPAP region spans residues 231–781 (YKYGYLTMDE…VSVEAQSSPG (551 aa)). Disordered regions lie at residues 378–417 (RSSQ…SQKI) and 508–533 (PPAY…PSHD). At serine 395 the chain carries Phosphoserine. Residues 517-529 (HTRNSIKPSSHNG) are compositionally biased toward polar residues. The interval 584-779 (PMELQIPTPP…ELVSVEAQSS (196 aa)) is PIN1-binding. 3 positions are modified to phosphoserine: serine 753, serine 779, and serine 1135.

As to quaternary structure, homodimer. Interacts with PIN1 via its WW domain. This interaction is dependent on STIL mitotic phosphorylation. Interacts with CPAP. Interacts with RBM14 and this interaction interferes with the interaction of STIL with CPAP. Forms a complex with CPAP and SASS6. Interacts (via N-terminus) with CEP85; this interaction is essential for efficient centriolar targeting of STIL and subsequent PLK4 activation. Ubiquitinated. In terms of processing, phosphorylated following the activation of the mitotic checkpoint. Expressed in all hematopoietic tissues and cell lines. Highly expressed in a variety of tumors characterized by increased mitotic activity with highest expression in lung cancer.

Its subcellular location is the cytoplasm. The protein resides in the cytosol. It is found in the cytoskeleton. It localises to the microtubule organizing center. The protein localises to the centrosome. Its subcellular location is the centriole. The protein resides in the cell cortex. Its function is as follows. Immediate-early gene. Plays an important role in embryonic development as well as in cellular growth and proliferation; its long-term silencing affects cell survival and cell cycle distribution as well as decreases CDK1 activity correlated with reduced phosphorylation of CDK1. Plays a role as a positive regulator of the sonic hedgehog pathway, acting downstream of PTCH1. Plays an important role in the regulation of centriole duplication. Required for the onset of procentriole formation and proper mitotic progression. During procentriole formation, is essential for the correct loading of SASS6 and CPAP to the base of the procentriole to initiate procentriole assembly. In complex with STIL acts as a modulator of PLK4-driven cytoskeletal rearrangements and directional cell motility. This Homo sapiens (Human) protein is SCL-interrupting locus protein (STIL).